The sequence spans 533 residues: uncharacterized protein (533 aa).

The next 4 helical transmembrane spans lie at 1–21 (MLAFPYLMTMITPPTFDVAFI), 135–155 (LPRFLFGVFLSEQMIAAIAAL), 193–213 (AIAAGKVVVAIGSPPTKAILA), and 472–492 (LLVNDDFEASPGFCVIGPLVG).

It localises to the cell membrane. This is an uncharacterized protein from Mycobacterium bovis (strain ATCC BAA-935 / AF2122/97).